A 470-amino-acid chain; its full sequence is MSAYALSQSHRQLTEGHLKDTDPEVDQIIKDEIDRQQHSIVLIASENFTTTAVFDALGTPMCNKYSEGYPGARYYGGNEHIDRMELLCQERALKAFGLTPDKWGVNVQTLSGSPANLQVYQAIMKPHERLMGLDLPHGGHLSHGYQTDSRKISAVSTYFETMPYRVDLETGLIDYDMLEKTAVLYRPKVLVAGTSAYCRLIDYKRMREIADKVGAYLVVDMAHISGLIAAGVIPSPFEYADIVTTTTHKSLRGPRGAMIFFRRGVRSVNPKTGQEILYDLENPINFSVFPGHQGGPHNHTIAALATALKQANTPEFKEYQEQVLKNAKALESEFTKKGYKLVSDGTDSHMVLVSLKDKQIDGARVETVCEKINIALNKNSIPGDKSALVPGGVRIGAPAMTTRGLGEEDFKKIVSYIDFAVNYAKEVQSQLPKDANKLKDFKNAVSGDSEKLKAVRDEIYQWAGSFPLAV.

Over residues 1–11 the composition is skewed to polar residues; sequence MSAYALSQSHR. The segment at 1-23 is disordered; that stretch reads MSAYALSQSHRQLTEGHLKDTDP. At Ser2 the chain carries N-acetylserine. A compositionally biased stretch (basic and acidic residues) spans 12-23; that stretch reads QLTEGHLKDTDP. The residue at position 249 (Lys249) is an N6-(pyridoxal phosphate)lysine.

It belongs to the SHMT family. Homotetramer. Pyridoxal 5'-phosphate serves as cofactor.

The protein resides in the cytoplasm. It carries out the reaction (6R)-5,10-methylene-5,6,7,8-tetrahydrofolate + glycine + H2O = (6S)-5,6,7,8-tetrahydrofolate + L-serine. The protein operates within one-carbon metabolism; tetrahydrofolate interconversion. Functionally, interconversion of serine and glycine. This is Serine hydroxymethyltransferase, cytosolic (SHM2) from Candida albicans (strain SC5314 / ATCC MYA-2876) (Yeast).